Here is a 413-residue protein sequence, read N- to C-terminus: 3-oxoacyl-[acyl-carrier-protein] synthase 2 (413 aa).

The region spanning 3 to 412 is the Ketosynthase family 3 (KS3) domain; that stretch reads KRRVVVTGLG…GTNGSLIFKK (410 aa). Catalysis depends on for beta-ketoacyl synthase activity residues Cys164, His304, and His341.

The protein belongs to the thiolase-like superfamily. Beta-ketoacyl-ACP synthases family. Homodimer.

The catalysed reaction is a fatty acyl-[ACP] + malonyl-[ACP] + H(+) = a 3-oxoacyl-[ACP] + holo-[ACP] + CO2. It catalyses the reaction (9Z)-hexadecenoyl-[ACP] + malonyl-[ACP] + H(+) = 3-oxo-(11Z)-octadecenoyl-[ACP] + holo-[ACP] + CO2. Its pathway is lipid metabolism; fatty acid biosynthesis. Its function is as follows. Involved in the type II fatty acid elongation cycle. Catalyzes the elongation of a wide range of acyl-ACP by the addition of two carbons from malonyl-ACP to an acyl acceptor. Can efficiently catalyze the conversion of palmitoleoyl-ACP (cis-hexadec-9-enoyl-ACP) to cis-vaccenoyl-ACP (cis-octadec-11-enoyl-ACP), an essential step in the thermal regulation of fatty acid composition. The sequence is that of 3-oxoacyl-[acyl-carrier-protein] synthase 2 (fabF) from Escherichia coli O157:H7.